Reading from the N-terminus, the 306-residue chain is Glutamyl-Q tRNA(Asp) synthetase (306 aa).

L-glutamate contacts are provided by residues 29–33 and Asp65; that span reads RFAPS. The 'HIGH' region motif lies at 32-42; sequence PSPTGPLHLGN. Residues Cys121, Cys123, Tyr141, and Cys145 each coordinate Zn(2+). L-glutamate contacts are provided by Tyr188 and Arg206. The 'KMSKS' region signature appears at 244-248; it reads KLAKR. Lys247 serves as a coordination point for ATP.

Belongs to the class-I aminoacyl-tRNA synthetase family. GluQ subfamily. Zn(2+) is required as a cofactor.

Its function is as follows. Catalyzes the tRNA-independent activation of glutamate in presence of ATP and the subsequent transfer of glutamate onto a tRNA(Asp). Glutamate is transferred on the 2-amino-5-(4,5-dihydroxy-2-cyclopenten-1-yl) moiety of the queuosine in the wobble position of the QUC anticodon. The protein is Glutamyl-Q tRNA(Asp) synthetase of Prochlorococcus marinus (strain MIT 9313).